Reading from the N-terminus, the 228-residue chain is MKISFHGQSCIKIITGDTTILVDPFISGNEKCDLKAEEQMPDFIVLSHGHDDHVGDTVEIAKNSGATVICNADLASFLAVEDGLENMAPMHIGGKRQFSFGQVKLTQAFHGSQTVRDGRIVNLGFPTGIVFTIEDKNIYFAGDTGLFSDMKLIGELNPLDVAFLPIGDNFTMGPEDAAIAARFLQAKLVVPMHYNTFPLIAQDPHKFVASLNEGIAGKVLEIGEGIEI.

Belongs to the UPF0173 family.

The sequence is that of UPF0173 metal-dependent hydrolase lmo1577 from Listeria monocytogenes serovar 1/2a (strain ATCC BAA-679 / EGD-e).